A 251-amino-acid polypeptide reads, in one-letter code: Triosephosphate isomerase (251 aa).

A substrate-binding site is contributed by 9–11 (NWK). Residue H94 is the Electrophile of the active site. Catalysis depends on E166, which acts as the Proton acceptor. Residues G172, S211, and 232-233 (GG) contribute to the substrate site.

This sequence belongs to the triosephosphate isomerase family. Homodimer.

The protein localises to the cytoplasm. The catalysed reaction is D-glyceraldehyde 3-phosphate = dihydroxyacetone phosphate. The protein operates within carbohydrate biosynthesis; gluconeogenesis. Its pathway is carbohydrate degradation; glycolysis; D-glyceraldehyde 3-phosphate from glycerone phosphate: step 1/1. In terms of biological role, involved in the gluconeogenesis. Catalyzes stereospecifically the conversion of dihydroxyacetone phosphate (DHAP) to D-glyceraldehyde-3-phosphate (G3P). This is Triosephosphate isomerase from Xanthomonas euvesicatoria pv. vesicatoria (strain 85-10) (Xanthomonas campestris pv. vesicatoria).